The following is a 546-amino-acid chain: 2-isopropylmalate synthase (546 aa).

The Pyruvate carboxyltransferase domain maps to 8 to 271; the sequence is ILIFDTTLRD…NSFFKRNPDS (264 aa). Aspartate 17, histidine 208, histidine 210, and asparagine 244 together coordinate Mn(2+). Residues 408–546 are regulatory domain; that stretch reads QLSLVQVSCG…TNTFLSNNAN (139 aa).

This sequence belongs to the alpha-IPM synthase/homocitrate synthase family. LeuA type 1 subfamily. As to quaternary structure, homodimer. Mn(2+) is required as a cofactor.

The protein resides in the cytoplasm. The catalysed reaction is 3-methyl-2-oxobutanoate + acetyl-CoA + H2O = (2S)-2-isopropylmalate + CoA + H(+). The protein operates within amino-acid biosynthesis; L-leucine biosynthesis; L-leucine from 3-methyl-2-oxobutanoate: step 1/4. Catalyzes the condensation of the acetyl group of acetyl-CoA with 3-methyl-2-oxobutanoate (2-ketoisovalerate) to form 3-carboxy-3-hydroxy-4-methylpentanoate (2-isopropylmalate). The sequence is that of 2-isopropylmalate synthase from Prochlorococcus marinus (strain AS9601).